Consider the following 317-residue polypeptide: L-lactate dehydrogenase 1 (317 aa).

NAD(+) is bound by residues V17, D38, K43, Y69, and 83–84 (GA). Q86 and R92 together coordinate substrate. NAD(+) contacts are provided by residues S105, 122–124 (ATN), and S147. 124 to 127 (NPVD) lines the substrate pocket. 152–155 (DSAR) is a substrate binding site. Residue H179 is the Proton acceptor of the active site. Phosphotyrosine is present on Y223. T232 contacts substrate.

Belongs to the LDH/MDH superfamily. LDH family. As to quaternary structure, homotetramer.

The protein resides in the cytoplasm. It catalyses the reaction (S)-lactate + NAD(+) = pyruvate + NADH + H(+). It participates in fermentation; pyruvate fermentation to lactate; (S)-lactate from pyruvate: step 1/1. Functionally, catalyzes the conversion of lactate to pyruvate (Potential). Appears to be the primary factor that allows S.aureus growth during nitrosative stress in both aerobically and anaerobically cultured cells. This is L-lactate dehydrogenase 1 from Staphylococcus aureus (strain JH1).